The following is a 239-amino-acid chain: 1-(5-phosphoribosyl)-5-[(5-phosphoribosylamino)methylideneamino] imidazole-4-carboxamide isomerase (239 aa).

Asp8 (proton acceptor) is an active-site residue. Asp129 acts as the Proton donor in catalysis.

This sequence belongs to the HisA/HisF family.

The protein localises to the cytoplasm. It carries out the reaction 1-(5-phospho-beta-D-ribosyl)-5-[(5-phospho-beta-D-ribosylamino)methylideneamino]imidazole-4-carboxamide = 5-[(5-phospho-1-deoxy-D-ribulos-1-ylimino)methylamino]-1-(5-phospho-beta-D-ribosyl)imidazole-4-carboxamide. It functions in the pathway amino-acid biosynthesis; L-histidine biosynthesis; L-histidine from 5-phospho-alpha-D-ribose 1-diphosphate: step 4/9. The chain is 1-(5-phosphoribosyl)-5-[(5-phosphoribosylamino)methylideneamino] imidazole-4-carboxamide isomerase from Bacillus anthracis (strain A0248).